Here is a 466-residue protein sequence, read N- to C-terminus: Ras GTPase-activating protein-binding protein 1 (466 aa).

The NTF2 domain occupies 11–133; the sequence is VGREFVRQYY…FYVHNDIFRY (123 aa). Glycyl lysine isopeptide (Lys-Gly) (interchain with G-Cter in ubiquitin) cross-links involve residues Lys-36, Lys-50, Lys-59, Lys-64, Lys-76, and Lys-123. Positions 142-225 are acidic disordered region; that stretch reads VTEPQEESEE…EPVLEETAPE (84 aa). Thr-143 bears the Phosphothreonine mark. Disordered regions lie at residues 144–172 and 184–243; these read EPQEESEEEVEEPEERQQTPEVVPDDSGT and EEHL…QTVQ. Acidic residues-rich tracts occupy residues 145–157 and 185–206; these read PQEESEEEVEEPE and EHLEEPVAEPEPDPEPEPEQEP. A Phosphoserine modification is found at Ser-149. Residues Ser-231, Ser-232, Ser-250, and Ser-253 each carry the phosphoserine modification. The disordered stretch occupies residues 255–329; that stretch reads TSKNLPPSGA…REAGEQGDIE (75 aa). Composition is skewed to basic and acidic residues over residues 297–307 and 318–329; these read PQRDQRVREQR and PIREAGEQGDIE. One can recognise an RRM domain in the interval 340 to 415; sequence HQLFIGNLPH…VRLNVEEKKT (76 aa). Residues Lys-353 and Lys-357 each participate in a glycyl lysine isopeptide (Lys-Gly) (interchain with G-Cter in ubiquitin) cross-link. Ser-373 bears the Phosphoserine mark. A Glycyl lysine isopeptide (Lys-Gly) (interchain with G-Cter in ubiquitin) cross-link involves residue Lys-376. Lys-376 carries the N6-acetyllysine; alternate modification. Residue Lys-376 forms a Glycyl lysine isopeptide (Lys-Gly) (interchain with G-Cter in SUMO2); alternate linkage. A Glycyl lysine isopeptide (Lys-Gly) (interchain with G-Cter in ubiquitin); alternate cross-link involves residue Lys-393. The segment at 410 to 466 is RG-rich region; the sequence is VEEKKTRAAREGDRRDNRLRGPGGPRGGLGGGMRGPPRGGMVQKPGFGVGRGLAPRQ. Over residues 413–428 the composition is skewed to basic and acidic residues; it reads KKTRAAREGDRRDNRL. The segment at 413-466 is disordered; the sequence is KKTRAAREGDRRDNRLRGPGGPRGGLGGGMRGPPRGGMVQKPGFGVGRGLAPRQ. Arg-429 is subject to Asymmetric dimethylarginine. Residues 430–447 show a composition bias toward gly residues; it reads GPGGPRGGLGGGMRGPPR. Arg-435 is subject to Asymmetric dimethylarginine; alternate. Arg-435 carries the post-translational modification Dimethylated arginine; alternate. An Omega-N-methylarginine; alternate modification is found at Arg-435. Position 447 is an omega-N-methylarginine (Arg-447). The residue at position 460 (Arg-460) is a Dimethylated arginine; alternate. Arg-460 bears the Omega-N-methylarginine; alternate mark. An Omega-N-methylarginine modification is found at Arg-465.

In terms of assembly, homodimer and oligomer. Component of a TAU mRNP complex, at least composed of IGF2BP1, ELAVL4 and G3BP1. Binds to the SH3 domain of Ras GTPase-activating protein (RASA1) in proliferating cells. No interaction in quiescent cells. Interacts (via NTF2 domain) with USP10; inhibiting stress granule formation by lowering G3BP1 valence. Interacts (via NTF2 domain) with CAPRIN1; promoting stress granule formation by lowering the saturation-concentration of G3BP1. Interacts (via NTF2 domain) with UBAP2L; promoting stress granule formation. Associates (via RG-rich region) with 40S ribosome subunits. Interacts with RPTOR and SPAG5; this complex is increased by oxidative stress. Interacts with ATXN2L. Interacts with STYXL1. Interacts with CGAS (via N-terminus); this interaction promotes the DNA-binding and activation of CGAS. Interacts (via C-terminus) with RIGI. Interacts with PABPC1. Interacts with QKI (isoforms QKI6 and QKI7); directing N(7)-methylguanine-containing mRNAs to stress granules. As to quaternary structure, (Microbial infection) Interacts with Semliki forest virus non-structural protein 3 (via C-terminus); this interaction inhibits the formation of stress granules on viral mRNAs and the nsp3-G3BP1 complexes bind viral RNAs and probably orchestrate the assembly of viral replication complexes. (Microbial infection) Interacts with Chikungunya virus non-structural protein 3 (via C-terminus); this interaction inhibits the formation of stress granules on viral mRNAs and the nsp3-G3BP1 complexes bind viral RNAs and probably orchestrate the assembly of viral replication complexes. In terms of assembly, (Microbial infection) Interacts with Sindbis virus non-structural protein 3 (via C-terminus); this interaction inhibits the formation of stress granules on viral mRNAs and the nsp3-G3BP1 complexes bind viral RNAs and probably orchestrate the assembly of viral replication complexes. As to quaternary structure, (Microbial infection) Interacts with Zika virus capsid protein C; this interaction is probably linked to the inhibition of stress granules formation by the virus. (Microbial infection) Interacts with reovirus type 2 protein sigma-NS; this interaction induces the relocalization of G3BP1 to the outer periphery of sigma-NS/mu-Ns viral factories and is probably involved in the suppression of the integrated stress response by the virus. In terms of assembly, (Microbial infection) Interacts with SARS-CoV-2 N protein; the interaction is enhanced by host HDAC6 which deacetylates the viral N protein and promotes N protein association with G3BP1, disrupting stress granule formation and facilitating viral replication. Interacts with HDAC6; the interaction increases during SARS-CoV-2 infection. Requires Mg(2+) as cofactor. Post-translationally, phosphorylation of the acidic disordered region regulates stress granule assembly. RASA1-dependent phosphorylation of Ser-149 induces a conformational change that prevents self-association. Dephosphorylation after HRAS activation is required for stress granule assembly. Ser-149 phosphorylation induces partial nuclear localization. In terms of processing, ubiquitinated by TRIM21 via 'Lys-63'-linked polyubiquitination in the NTF2 domain in response to heat shock, leading to stress granule disassembly: ubiquitination promotes interaction with the FAF2 adapter, followed by interaction with VCP, which extracts G3BP1 from stress granules, leading to stress granule disassembly. In case of prolonged stress, ubiquitination by TRIM21 leads to autophagy-dependent degradation of G3BP1 via recruitment of ubiquitinated G3BP1 by SQSTM1 and/or CALCOCO2 to autophagosomes. (Microbial infection) Cleaved by human enterovirus 71; this cleavage induces the disassembly of cytoplasmic stress granules. Cleaved by Foot-and-mouth disease virus; this cleavage suppresses the formation of cytoplasmic stress granules. Post-translationally, arg-435 is dimethylated, probably to asymmetric dimethylarginine. In terms of processing, (Microbial infection) Cleaved by Encephalomyocarditis virus protease 3C; this cleavage suppresses the formation of cytoplasmic stress granules. Ubiquitous.

It localises to the cytoplasm. It is found in the cytosol. The protein resides in the perikaryon. The protein localises to the stress granule. Its subcellular location is the nucleus. The enzyme catalyses ATP + H2O = ADP + phosphate + H(+). Under physiological conditions, G3BP1 adopts a compact state that is stabilized by intramolecular interactions between the RG-rich and the acidic regions that inhibit phase separation. Upon stress, polysomes disassemble and mRNAs are released in an unfolded protein-free state. Binding of unfolded mRNA to G3BP1 outcompetes the intramolecular interactions and RNA-bound G3BP1 adopts an expanded conformation in which the RG-rich region becomes exposed to engage in protein-protein and protein-RNA interactions, allowing physical cross-linking of RNA molecules to form protein-RNA condensates, leading to liquid-liquid phase separation (LLPS). Protein involved in various processes, such as stress granule formation and innate immunity. Plays an essential role in stress granule formation. Stress granules are membraneless compartments that store mRNAs and proteins, such as stalled translation pre-initiation complexes, in response to stress. Promotes formation of stress granules phase-separated membraneless compartment by undergoing liquid-liquid phase separation (LLPS) upon unfolded RNA-binding: functions as a molecular switch that triggers RNA-dependent LLPS in response to a rise in intracellular free RNA concentrations. Also acts as an ATP- and magnesium-dependent helicase: unwinds DNA/DNA, RNA/DNA, and RNA/RNA substrates with comparable efficiency. Acts unidirectionally by moving in the 5' to 3' direction along the bound single-stranded DNA. Unwinds preferentially partial DNA and RNA duplexes having a 17 bp annealed portion and either a hanging 3' tail or hanging tails at both 5'- and 3'-ends. Plays an essential role in innate immunity by promoting CGAS and RIGI activity. Participates in the DNA-triggered cGAS/STING pathway by promoting the DNA binding and activation of CGAS. Triggers the condensation of cGAS, a process probably linked to the formation of membrane-less organelles. Also enhances RIGI-induced type I interferon production probably by helping RIGI at sensing pathogenic RNA. May also act as a phosphorylation-dependent sequence-specific endoribonuclease in vitro: Cleaves exclusively between cytosine and adenine and cleaves MYC mRNA preferentially at the 3'-UTR. This Homo sapiens (Human) protein is Ras GTPase-activating protein-binding protein 1.